The primary structure comprises 661 residues: MDENAIRAAIFIQKWYRRHQARREMQRRCNWQIFQNLEYASEQDQAELYKFFNDLIKHMPQAAGRKNQYQGSAHVSVLDDKDDLVEEFGDIVNAKIELPIRKNHIDLLIDVFRKKRGNRLHPKYVALILREAAKSLKQLPNISPVSTAVSQQVTVCGDLHGKLDDLLVVLHKNGLPSSSNPYVFNGDFVDRGKRGLEVLLLLLSLYLAFPNAVFLNRGNHEDSVMNARYGFIREVESKYPRNHKRILAFIDEVYRWLPLGSVLNSRVLIVHGGFSDSTSLDLIKSIDRGKYVSILRPPLTDGEPLDKTEWQQIFDIMWSDPQATMGCVPNTLRGAGVWFGPDVTDNFLQRHRLSYVIRSHECKPNGHEFMHDNKIITIFSASNYYAIGSNKGAYIRLNNQLMPHFVQYISAASQTKRLSFKQRMGIVESSALKELAVRMRDHRDELEDEFRKYDPKDSGYISISHWCKVMENVTKLGLPWRLLRDKLAPGTDSQKVNYNRTLDLLDTDVILEAEADGMSVMDALYANKASLVAIFNIIDADNSGEITLDEFETAIDLLVAHMPGAYSKAEMLEKCRMMDLNGDGKVDLNEFLEAFRLSDLHRKEQQDENIRRRSTGRPSVAKTATDPVTLLADKISKNTLVVEHDIDPTDCESKVIDPKKS.

One can recognise an IQ domain in the interval 7-32 (RAAIFIQKWYRRHQARREMQRRCNWQ). The interval 105 to 413 (IDLLIDVFRK…HFVQYISAAS (309 aa)) is catalytic. Residues D158, H160, D187, and N219 each coordinate Mn(2+). H220 acts as the Proton donor in catalysis. Mn(2+) is bound by residues H271 and H360. EF-hand domains are found at residues 441 to 476 (DHRDELEDEFRKYDPKDSGYISISHWCKVMENVTKL), 526 to 561 (ANKASLVAIFNIIDADNSGEITLDEFETAIDLLVAH), and 566 to 601 (YSKAEMLEKCRMMDLNGDGKVDLNEFLEAFRLSDLH). Positions 539, 541, 543, 545, 550, 579, 581, 583, 585, and 590 each coordinate Ca(2+). The segment at 606 to 625 (QDENIRRRSTGRPSVAKTAT) is disordered.

Belongs to the PPP phosphatase family. The cofactor is Mn(2+). Expressed in the visual system of the fly, as well as in the mushroom bodies of the central brain.

The enzyme catalyses O-phospho-L-seryl-[protein] + H2O = L-seryl-[protein] + phosphate. The catalysed reaction is O-phospho-L-threonyl-[protein] + H2O = L-threonyl-[protein] + phosphate. In terms of biological role, phosphatase required to prevent light-induced retinal degeneration. The chain is Serine/threonine-protein phosphatase rdgC (rdgC) from Drosophila melanogaster (Fruit fly).